We begin with the raw amino-acid sequence, 144 residues long: L-fucose mutarotase (144 aa).

His-22 acts as the Proton donor in catalysis. Substrate is bound by residues Asp-30, Arg-109, and 131-133 (YGN).

Belongs to the RbsD / FucU family. FucU mutarotase subfamily. As to quaternary structure, homodecamer.

Its subcellular location is the cytoplasm. The catalysed reaction is alpha-L-fucose = beta-L-fucose. Its pathway is carbohydrate metabolism; L-fucose metabolism. Its function is as follows. Involved in the anomeric conversion of L-fucose. This Haemophilus influenzae (strain PittEE) protein is L-fucose mutarotase.